A 282-amino-acid chain; its full sequence is F-box protein VBF (282 aa).

Residues Met-1–Phe-44 form the F-box domain.

As to quaternary structure, component of SCF(VBF) E3 ubiquitin ligase complex that interacts with VIP1. Interacts directly with SKP1A and VIP1. Forms a complex composed of VIP1, VBF and Agrobacterium virE2.

Component of SCF(VBF) E3 ubiquitin ligase complexes, which mediate the ubiquitination and subsequent proteasomal degradation of target proteins such as VIP1 and Agrobacterium virE2, after their implication in T-DNA translocation to the host nucleus (can functionally replace Agrobacterium VirF). Required during Agrobacterium-induced tumor formation. In Arabidopsis thaliana (Mouse-ear cress), this protein is F-box protein VBF (VBF).